Here is a 136-residue protein sequence, read N- to C-terminus: UPF0275 protein PM0493 (136 aa).

Belongs to the UPF0275 family.

The protein is UPF0275 protein PM0493 of Pasteurella multocida (strain Pm70).